A 453-amino-acid chain; its full sequence is Regulatory protein opaque-2 (453 aa).

The interval 145–243 is disordered; the sequence is SSVVTSDQRS…SNRESARRSR (99 aa). Polar residues predominate over residues 146–175; sequence SVVTSDQRSQGSNNHTGGSSIRNNPVQNKL. Residues 207–216 are compositionally biased toward acidic residues; the sequence is PSDEDMDGEV. Over residues 224 to 240 the composition is skewed to basic and acidic residues; it reads PTEERVRKKESNRESAR. In terms of domain architecture, bZIP spans 225–288; it reads TEERVRKKES…NDANVDNRVL (64 aa). The tract at residues 228–251 is basic motif; that stretch reads RVRKKESNRESARRSRYRKAAHLK. The segment at 253-274 is leucine-zipper; it reads LEDQVAQLKAENSCLLRRIAAL.

This sequence belongs to the bZIP family. Interacts with the Dof zinc finger protein PBF. In terms of tissue distribution, seed endosperm.

It is found in the nucleus. Functionally, involved in the regulation of the endosperm-specific production of albumin b-32 and other zein proteins. It is a trans-acting transcriptional activator that binds to the consensus sequence 5'-GATGAYRTGR-3'. This chain is Regulatory protein opaque-2 (O2), found in Zea mays (Maize).